We begin with the raw amino-acid sequence, 490 residues long: Glutamate--tRNA ligase (490 aa).

The 'HIGH' region motif lies at 10–20; that stretch reads PSPTGRMHVGN. Zn(2+) is bound by residues Cys-109, Cys-111, Cys-140, and His-142. A 'KMSKS' region motif is present at residues 257–261; it reads KLSKR. Lys-260 serves as a coordination point for ATP.

The protein belongs to the class-I aminoacyl-tRNA synthetase family. Glutamate--tRNA ligase type 1 subfamily. Monomer. Zn(2+) is required as a cofactor.

It localises to the cytoplasm. It catalyses the reaction tRNA(Glu) + L-glutamate + ATP = L-glutamyl-tRNA(Glu) + AMP + diphosphate. Its function is as follows. Catalyzes the attachment of glutamate to tRNA(Glu) in a two-step reaction: glutamate is first activated by ATP to form Glu-AMP and then transferred to the acceptor end of tRNA(Glu). The protein is Glutamate--tRNA ligase of Lachnoclostridium phytofermentans (strain ATCC 700394 / DSM 18823 / ISDg) (Clostridium phytofermentans).